Consider the following 34-residue polypeptide: Photosystem II reaction center protein T (34 aa).

Residues 3–23 traverse the membrane as a helical segment; it reads SVAYILIFTLTIGTLFFAVAF.

The protein belongs to the PsbT family. PSII is composed of 1 copy each of membrane proteins PsbA, PsbB, PsbC, PsbD, PsbE, PsbF, PsbH, PsbI, PsbJ, PsbK, PsbL, PsbM, PsbT, PsbX, PsbY, PsbZ, Psb30/Ycf12, peripheral proteins PsbO, CyanoQ (PsbQ), PsbU, PsbV and a large number of cofactors. It forms dimeric complexes.

The protein resides in the cellular thylakoid membrane. Its function is as follows. Found at the monomer-monomer interface of the photosystem II (PS II) dimer, plays a role in assembly and dimerization of PSII. PSII is a light-driven water plastoquinone oxidoreductase, using light energy to abstract electrons from H(2)O, generating a proton gradient subsequently used for ATP formation. This is Photosystem II reaction center protein T from Mastigocladus laminosus (Fischerella sp.).